Here is a 272-residue protein sequence, read N- to C-terminus: Undecaprenyl-diphosphatase (272 aa).

Helical transmembrane passes span 2-22, 43-63, 82-102, 110-130, 185-205, 224-244, and 252-272; these read FDII…FLPI, FINM…ILLY, WQLW…GLPL, LHTP…FIIL, YVAT…VSIL, VLMT…KWLL, and FKPF…VMFI.

The protein belongs to the UppP family.

It localises to the cell membrane. The catalysed reaction is di-trans,octa-cis-undecaprenyl diphosphate + H2O = di-trans,octa-cis-undecaprenyl phosphate + phosphate + H(+). Its function is as follows. Catalyzes the dephosphorylation of undecaprenyl diphosphate (UPP). Confers resistance to bacitracin. The sequence is that of Undecaprenyl-diphosphatase from Lacticaseibacillus paracasei (strain ATCC 334 / BCRC 17002 / CCUG 31169 / CIP 107868 / KCTC 3260 / NRRL B-441) (Lactobacillus paracasei).